The primary structure comprises 275 residues: Ribosomal RNA small subunit methyltransferase A (275 aa).

Residues Asn21, Leu23, Gly48, Glu69, Asp94, and Asn115 each coordinate S-adenosyl-L-methionine.

Belongs to the class I-like SAM-binding methyltransferase superfamily. rRNA adenine N(6)-methyltransferase family. RsmA subfamily.

It localises to the cytoplasm. It catalyses the reaction adenosine(1518)/adenosine(1519) in 16S rRNA + 4 S-adenosyl-L-methionine = N(6)-dimethyladenosine(1518)/N(6)-dimethyladenosine(1519) in 16S rRNA + 4 S-adenosyl-L-homocysteine + 4 H(+). Functionally, specifically dimethylates two adjacent adenosines (A1518 and A1519) in the loop of a conserved hairpin near the 3'-end of 16S rRNA in the 30S particle. May play a critical role in biogenesis of 30S subunits. This is Ribosomal RNA small subunit methyltransferase A from Clostridium botulinum (strain Langeland / NCTC 10281 / Type F).